Reading from the N-terminus, the 1719-residue chain is MGVPKFYRWISERYPCLSEVVKEHQIPEFDNLYLDMNGIIHQCSHPNDDDVHFRISDDKIFTDIFHYLEVLFRIIKPRKVFFMAVDGVAPRAKMNQQRGRRFRSAKEAEDKIKKAIEKGETLPTEARFDSNCITPGTEFMARLHEHLKYFVNMKISTDKSWQGVTIYFSGHETPGEGEHKIMEFIRSEKAKPDHDPNTRHCLYGLDADLIMLGLTSHEAHFSLLREEVRFGGKKTQRVCAPEETTFHLLHLSLMREYIDYEFSALKEKITFKYDIEKIIDDWILMGFLVGNDFIPHLPHLHINHDALPLLYGTYIAILPELGGYINESGHLNLPRFERYLVKLSDFDREHFSEVFVDLKWFESKVGNKYLNEAAGAAAEEAKNCKEKRKPKGQENSLSWAALDKSEGEGVASRDNFEDETEDDDLFETEFRQYKRTYYMTKMGVDVVSDEFLANQAACYVQAIQWILHYYYHGVQSWSWYYPYHYAPFLSDIRSISTLKIHFELGKPFKPFEQLLAVLPSASKNLLPTCYQHLMTSEDSPIIEYYPPDFKTDLNGKQQEWEAVVLIPFIDETRLLEAMETCNHSLKKEERKRNQHSECLMCWYDRDTEFTYSSPWPEKFPAIERCCTRYKMISLDAWRVDINKNKITRVDQKALYFCGFPTLKHIKHKFFLKKSGVQVFQQSSRGENLMLEISVNAEPDELRIENIASAVLGKAVFVNWPHLEEARVVAVSDGETKFYIEEPPGTQKVYLGKTAPPSKVIQLTDKEQSNWTKEIQGISEQYLRRKGIIINETSAVVYAQLLTGRKYQISQNGEVRLEKQWSKQILPFVYQTIVKDIRAFDSRFSNIKTLDDLFPPRTMVFMLGTPYYGCTGEVQDSGDLITEGRIRVVFSIPCEPNLDALIQNQHKYSIKYNPGYVLAGRLGVSGYLVSRFTGSIFIGRGSRRNPHGDHKANVGLNLKFNKKNEEVPGYTKKVGNEWMYSSAAEQLLAEYIERAPELFSYIAKNSQEDVFYEDDIWPGENENGAEKVQEIITWLKGHPVSTLSRSSCDLHILDAAIVEKIEEEVEKCKQRKSNKKVRVTVKPHLMYRPLEQQHGVIPDRDAEFRLFDRVVNVRESFSVPVGLRGTVIGIKGASREADVLFEVLFDEEFPGGLTIRCSPGRGYRLPTSALVNLSHGSRCETGNQKLTAIVKPQPSVSHCSAAPSGHLGGLNHSPQSPFLPTQVPTKGDDEFCNIWQSLQGAGKTQHLQPTVQEKGAVLPQEISQVTEGHKSGFTDHSVRHQQRKHDSQRKFKEEYKSPKAECQSQKLSSKQTSGGSARCSIKLLKRNESPGTSEAQKVVTSYPNAVHKPPSGIENFLASLNLSKENEAQLPHHGEPPDEADLSPQSFAMKGTRMLKEILKIDSPDTRDSKNDMKKSDNEATVSSRRDERGVSAHPKPTCHMNKPHGTNEFQNVASVDSVCWPGQMPPVSTPVTELSRICSLVGMPQPDFSFLRTTQTMTVCQVKLSNGLLVHGPQCHSESEAKERAALFALQQLGSLGVSFPLPPPIFTNYPPAVPPGAVPPVFTQPTANIMPSSSHLFGSVSWRPPVPVAGNAFHYPSYPGTMPLAGGVPGGVHSQFIPLQVTKKRVANRKNFENKEAQSSQATPLQTNKPGSSEATKMTPQESPPASSSSSQAAQPVSSHVETASQGHVGSQPRSAPSSSKRKSRKLAVNFSVSKPSE.

The span at 1268–1298 (HKSGFTDHSVRHQQRKHDSQRKFKEEYKSPK) shows a compositional bias: basic and acidic residues. A disordered region spans residues 1268 to 1317 (HKSGFTDHSVRHQQRKHDSQRKFKEEYKSPKAECQSQKLSSKQTSGGSAR). Residues 1301 to 1314 (CQSQKLSSKQTSGG) show a composition bias toward polar residues. A Phosphoserine modification is found at Ser1382. Positions 1397–1430 (ILKIDSPDTRDSKNDMKKSDNEATVSSRRDERGV) are enriched in basic and acidic residues. Disordered regions lie at residues 1397 to 1445 (ILKI…KPHG) and 1634 to 1719 (ENKE…KPSE). Residues 1638-1660 (AQSSQATPLQTNKPGSSEATKMT) show a composition bias toward polar residues. Positions 1661 to 1680 (PQESPPASSSSSQAAQPVSS) are enriched in low complexity. Residues 1681–1690 (HVETASQGHV) are compositionally biased toward polar residues.

It belongs to the 5'-3' exonuclease family. Found in a mRNP complex with UPF1, UPF2, UPF3B and XRN1. Associates with alpha and beta tubulins. Interacts with DIS3L2. Interacts with ZC3HAV1 in an RNA-dependent manner. Interacts with ZFP36L1. Interacts with TRIM71 (via NHL repeats) in an RNA-dependent manner. Interacts with YTHDC2 (via ANK repeats). Interacts with DHX34; the interaction is RNA-independent. In terms of tissue distribution, expressed in heart, brain (spinal cord, dorsal root and superior cervical ganglia, neurons of the cerebrum and brain stem), peripheral nerve fibers in the skin and intestine, spleen, lung, liver, skeletal muscle, kidney and testis.

It is found in the cytoplasm. Functionally, major 5'-3' exoribonuclease involved in mRNA decay. Required for the 5'-3'-processing of the G4 tetraplex-containing DNA and RNA substrates. The kinetic of hydrolysis is faster for G4 RNA tetraplex than for G4 DNA tetraplex and monomeric RNA tetraplex. Binds to RNA and DNA. Plays a role in replication-dependent histone mRNA degradation. This Mus musculus (Mouse) protein is 5'-3' exoribonuclease 1.